Reading from the N-terminus, the 264-residue chain is MAPRAAAIRQTCCCFNVRIATTALAIYHVIMSVLLFIEHSVEVAHGKASCKFSKTGYLRIAELVSSFLLITMLFIISLSLLVGVVKNREKYLLPFLSLQIMDFLLCLLTLMGSYIELPAYLKFASRSSRRVSPSKVPLMTLQLLDFCLSILTLCSSYMEVPTYLNFKSMNHMNYLPSQDGMTHNQFIKIMIIFSIAFITVLILKVYMFKCVWRCYRLMKCTNSAEERSGSKMLQKVVLPSYEEAVSLPYKVPEGGPAPPPYSEV.

The next 5 membrane-spanning stretches (helical) occupy residues 19–39 (IATT…FIEH), 64–84 (VSSF…LVGV), 92–112 (LLPF…TLMG), 136–156 (VPLM…LCSS), and 186–206 (FIKI…LKVY). Tyrosine 261 is subject to Phosphotyrosine.

It belongs to the LAPTM4/LAPTM5 transporter family. As to quaternary structure, binds to ubiquitin.

Its subcellular location is the lysosome membrane. Functionally, may have a special functional role during embryogenesis and in adult hematopoietic cells. The sequence is that of Lysosomal-associated transmembrane protein 5 (LAPTM5) from Bos taurus (Bovine).